The primary structure comprises 311 residues: HPr kinase/phosphorylase (311 aa).

Active-site residues include His-138 and Lys-159. ATP is bound at residue 153–160 (GDSGIGKS). Ser-160 is a binding site for Mg(2+). Asp-177 serves as the catalytic Proton acceptor; for phosphorylation activity. Proton donor; for dephosphorylation activity. Residues 201–210 (LEIRGVGIID) form an important for the catalytic mechanism of both phosphorylation and dephosphorylation region. Glu-202 is a Mg(2+) binding site. Arg-243 is an active-site residue. The interval 264–269 (PVKTGR) is important for the catalytic mechanism of dephosphorylation.

Belongs to the HPrK/P family. In terms of assembly, homohexamer. Requires Mg(2+) as cofactor.

It catalyses the reaction [HPr protein]-L-serine + ATP = [HPr protein]-O-phospho-L-serine + ADP + H(+). The catalysed reaction is [HPr protein]-O-phospho-L-serine + phosphate + H(+) = [HPr protein]-L-serine + diphosphate. Catalyzes the ATP- as well as the pyrophosphate-dependent phosphorylation of a specific serine residue in HPr, a phosphocarrier protein of the phosphoenolpyruvate-dependent sugar phosphotransferase system (PTS). HprK/P also catalyzes the pyrophosphate-producing, inorganic phosphate-dependent dephosphorylation (phosphorolysis) of seryl-phosphorylated HPr (P-Ser-HPr). The two antagonistic activities of HprK/P are regulated by several intracellular metabolites, which change their concentration in response to the absence or presence of rapidly metabolisable carbon sources (glucose, fructose, etc.) in the growth medium. Therefore, by controlling the phosphorylation state of HPr, HPrK/P is a sensor enzyme that plays a major role in the regulation of carbon metabolism and sugar transport: it mediates carbon catabolite repression (CCR), and regulates PTS-catalyzed carbohydrate uptake and inducer exclusion. The protein is HPr kinase/phosphorylase of Streptococcus sanguinis (strain SK36).